The chain runs to 406 residues: LIM/homeobox protein Lhx1 (406 aa).

LIM zinc-binding domains follow at residues 4–54 (CAGC…CKND) and 63–117 (CAGC…CKED). Disordered regions lie at residues 128–189 (NSLH…TIKA) and 294–372 (DFFP…SAEV). The span at 137–148 (SDPSLSPDSQDP) shows a compositional bias: low complexity. A compositionally biased stretch (basic and acidic residues) spans 151-167 (DDAKDSESANVSDKEGG). Serine 162 bears the Phosphoserine mark. The homeobox DNA-binding region spans 180 to 239 (RRGPRTTIKAKQLETLKAAFAATPKPTRHIREQLAQETGLNMRVIQVWFQNRRSKERRMK). Residues 315-327 (PSSGPSGTPLGGL) are compositionally biased toward low complexity. Residues 352–362 (GDSPSPEPSLP) are compositionally biased toward pro residues.

In terms of assembly, interacts with LDB1 via the tandem LIM domains.

Its subcellular location is the nucleus. Functionally, potential transcription factor. May play a role in early mesoderm formation and later in lateral mesoderm differentiation and neurogenesis. This chain is LIM/homeobox protein Lhx1 (Lhx1), found in Mesocricetus auratus (Golden hamster).